The sequence spans 790 residues: MANVRKRRKKKNEHKALRLTFITLLMVFLFSCVAAAGVGLAMIKAAPPLDVDKVLNPSEPSVIYDDKNKLVDTVISDTYRTIVSYEDVPDNLKNAFISIEDERFFNHRGIDYKRVFGAFFRNISNKLKGKSALQGASTITQQLVRNTLLSQEVRIKRKVQEMYLSIQLEKKVSKEQILEAYMNTIPLGGSAYGIEAASKQYFGKSVKDLNLIESAFIAGLPQSPSTFYNAAMSQKNTERYINRTKLVLGKMREHNYISKEDFDKSMAYIDKNKIPLKTSNINISRLNYEWFSREIIKQVKKDLMNEYKISPTEADKTIMYGGLKIYGTMDKSLQDFSQNTLDNLDGILGINSKDYSGIIQPEASVSIVDYKTGNVKVLIGGRGKQPPLSFNRATEFYRAPGSTIKPLTVYGPAIDTKTSTAASSYNDAPVPEEIGKLYDKEPYNPKNSPNIYEGKMTLREALMKSKNVISVRIEHELGLKTGAEYGKKFGLTIDDSMDGTSMAALSLGQLSAKTGVSGTNTLGMAAAYGVFGNKGALSKPVVYKKVVDRTGKVLLENKYASSKVMSPEAAYILYDLLKGPVSYTPGATGMKANFGPMARGKTGTSNQSSDLWFAGLSPYYSAAVWIGKDDYSPFTNEFGRYIGSSDAALIWKLIMGEAHKNLEYKTIEKPAGVTEAYVCSKSGKIPSSSCPRDSIKLEYFIEGTIPGEICDYHTGIFNNNKDKDDDDDDKDKDKEDEEENKDEKNEDKKEAKDNTKNKDKDKKKDNDRKIDMDKKPDSSKRKRKMIKPQI.

The Cytoplasmic segment spans residues 1–20; the sequence is MANVRKRRKKKNEHKALRLT. Residues 21–41 form a helical; Signal-anchor for type II membrane protein membrane-spanning segment; the sequence is FITLLMVFLFSCVAAAGVGLA. The Extracellular segment spans residues 42 to 790; that stretch reads MIKAAPPLDV…RKRKMIKPQI (749 aa). Residues 61-230 form a transglycosylase region; that stretch reads SVIYDDKNKL…PQSPSTFYNA (170 aa). Residue Glu-100 is the Proton donor; for transglycosylase activity of the active site. Residues 363-656 form a transpeptidase region; that stretch reads ASVSIVDYKT…AALIWKLIMG (294 aa). Ser-402 serves as the catalytic Acyl-ester intermediate; for transpeptidase activity. Residues 720–790 are disordered; sequence NKDKDDDDDD…RKRKMIKPQI (71 aa). The span at 724–740 shows a compositional bias: acidic residues; sequence DDDDDDKDKDKEDEEEN. Residues 741 to 779 are compositionally biased toward basic and acidic residues; that stretch reads KDEKNEDKKEAKDNTKNKDKDKKKDNDRKIDMDKKPDSS. The segment covering 780–790 has biased composition (basic residues); sequence KRKRKMIKPQI.

In the N-terminal section; belongs to the glycosyltransferase 51 family. It in the C-terminal section; belongs to the transpeptidase family.

It localises to the cell membrane. It carries out the reaction [GlcNAc-(1-&gt;4)-Mur2Ac(oyl-L-Ala-gamma-D-Glu-L-Lys-D-Ala-D-Ala)](n)-di-trans,octa-cis-undecaprenyl diphosphate + beta-D-GlcNAc-(1-&gt;4)-Mur2Ac(oyl-L-Ala-gamma-D-Glu-L-Lys-D-Ala-D-Ala)-di-trans,octa-cis-undecaprenyl diphosphate = [GlcNAc-(1-&gt;4)-Mur2Ac(oyl-L-Ala-gamma-D-Glu-L-Lys-D-Ala-D-Ala)](n+1)-di-trans,octa-cis-undecaprenyl diphosphate + di-trans,octa-cis-undecaprenyl diphosphate + H(+). It catalyses the reaction Preferential cleavage: (Ac)2-L-Lys-D-Ala-|-D-Ala. Also transpeptidation of peptidyl-alanyl moieties that are N-acyl substituents of D-alanine.. It functions in the pathway cell wall biogenesis; peptidoglycan biosynthesis. In terms of biological role, cell wall formation. Synthesis of cross-linked peptidoglycan from the lipid intermediates. The enzyme has a penicillin-insensitive transglycosylase N-terminal domain (formation of linear glycan strands) and a penicillin-sensitive transpeptidase C-terminal domain (cross-linking of the peptide subunits). The polypeptide is Penicillin-binding protein 1A (pbpA) (Clostridium tetani (strain Massachusetts / E88)).